Reading from the N-terminus, the 529-residue chain is Berberine bridge enzyme-like 7 (529 aa).

The signal sequence occupies residues 1 to 19 (MKEALSILCLALLVSVSEA). C32 and C95 are oxidised to a cystine. A glycan (N-linked (GlcNAc...) asparagine) is linked at N52. The FAD-binding PCMH-type domain maps to 69–247 (YSSPNFKKLL…LSWKINLVKV (179 aa)). The segment at residues 110 to 172 (HDLEGLSYRS…QTLAFPAGVC (63 aa)) is a cross-link (6-(S-cysteinyl)-8alpha-(pros-histidyl)-FAD (His-Cys)). N-linked (GlcNAc...) asparagine glycosylation is found at N257, N341, and N439.

The protein belongs to the oxygen-dependent FAD-linked oxidoreductase family. FAD serves as cofactor. In terms of processing, the FAD cofactor is bound via a bicovalent 6-S-cysteinyl, 8alpha-N1-histidyl FAD linkage.

The protein resides in the secreted. The protein localises to the cell wall. Probable flavin-dependent oxidoreductase. The sequence is that of Berberine bridge enzyme-like 7 from Arabidopsis thaliana (Mouse-ear cress).